A 353-amino-acid polypeptide reads, in one-letter code: RNA 3'-terminal phosphate cyclase (353 aa).

ATP contacts are provided by residues Q100 and 285-289 (HAADQ). The Tele-AMP-histidine intermediate role is filled by H311.

It belongs to the RNA 3'-terminal cyclase family. Type 1 subfamily.

Its subcellular location is the cytoplasm. It carries out the reaction a 3'-end 3'-phospho-ribonucleotide-RNA + ATP = a 3'-end 2',3'-cyclophospho-ribonucleotide-RNA + AMP + diphosphate. In terms of biological role, catalyzes the conversion of 3'-phosphate to a 2',3'-cyclic phosphodiester at the end of RNA. The mechanism of action of the enzyme occurs in 3 steps: (A) adenylation of the enzyme by ATP; (B) transfer of adenylate to an RNA-N3'P to produce RNA-N3'PP5'A; (C) and attack of the adjacent 2'-hydroxyl on the 3'-phosphorus in the diester linkage to produce the cyclic end product. The biological role of this enzyme is unknown but it is likely to function in some aspects of cellular RNA processing. This chain is RNA 3'-terminal phosphate cyclase, found in Nitrosospira multiformis (strain ATCC 25196 / NCIMB 11849 / C 71).